We begin with the raw amino-acid sequence, 64 residues long: Putative isoleucine--tRNA ligase (64 aa).

It belongs to the class-I aminoacyl-tRNA synthetase family. As to quaternary structure, member of a complex that includes annexin.

It carries out the reaction tRNA(Ile) + L-isoleucine + ATP = L-isoleucyl-tRNA(Ile) + AMP + diphosphate. The protein is Putative isoleucine--tRNA ligase of Physarum polycephalum (Slime mold).